We begin with the raw amino-acid sequence, 143 residues long: Transcriptional regulator MraZ (143 aa).

SpoVT-AbrB domains are found at residues 5-47 (THSP…PIRE) and 76-119 (ASNE…DAQT).

Belongs to the MraZ family. As to quaternary structure, forms oligomers.

The protein resides in the cytoplasm. It is found in the nucleoid. This Thermobifida fusca (strain YX) protein is Transcriptional regulator MraZ.